The chain runs to 457 residues: MALWGGRFTQAADQRFKQFNDSLRFDYRLAEQDIVGSVAWSKALVTVGVLTAEEQAQLEEALNVLLEDVRARPQQILESDAEDIHSWVEGKLIDKVGQLGKKLHTGRSRNDQVATDLKLWCKDTVSELLTANRQLQSALVETAQNNQDAVMPGYTHLQRAQPVTFAHWCLAYVEMLARDESRLQDALKRLDVSPLGCGALAGTAYEIDREQLAGWLGFASATRNSLDSVSDRDHVLELLSAAAIGMVHLSRFAEDLIFFNTGEAGFVELSDRVTSGSSLMPQKKNPDALELIRGKCGRVQGALTGMMMTLKGLPLAYNKDMQEDKEGLFDALDTWLDCLHMAALVLDGIQVKRPRCQEAAQQGYANATELADYLVAKGVPFREAHHIVGEAVVEAIRQGKPLEELPLTELQKFSPVIGEDVYPILSLQSCLDKRAAKGGVSPQQVARAIAFARARLG.

This sequence belongs to the lyase 1 family. Argininosuccinate lyase subfamily.

The protein resides in the cytoplasm. The catalysed reaction is 2-(N(omega)-L-arginino)succinate = fumarate + L-arginine. The protein operates within amino-acid biosynthesis; L-arginine biosynthesis; L-arginine from L-ornithine and carbamoyl phosphate: step 3/3. The sequence is that of Argininosuccinate lyase from Escherichia coli O157:H7.